Consider the following 203-residue polypeptide: Probable deoxycytidylate deaminase (203 aa).

Residues 27–163 (HWDDYFMATS…PTYRASKRML (137 aa)) enclose the CMP/dCMP-type deaminase domain. Residue His102 participates in Zn(2+) binding. Residue Glu104 is the Proton donor of the active site. Zn(2+) contacts are provided by Cys128 and Cys131.

This sequence belongs to the cytidine and deoxycytidylate deaminase family. Zn(2+) serves as cofactor.

It catalyses the reaction dCMP + H2O + H(+) = dUMP + NH4(+). Supplies the nucleotide substrate for thymidylate synthetase. The sequence is that of Probable deoxycytidylate deaminase from Drosophila melanogaster (Fruit fly).